The chain runs to 977 residues: SFYDYEFESTFEYSSEINSIVDGVLPDVDSGFPTDTEETKSEPKQPDTKPEQPSVSKPDSSVNGIVPGVSEPKPKQPSGSKPDGSAPGLKPGGGKPEGGIKPEPQVPITNLGSSTSQSSSYISITNLYDILSIIFNLSHIGGTGKGYTDRVSGGVGIGASGGAGGVGGAGGVGGAGGVGGAGGAGGADGASVGAGGGADGGAYGGGYGAGYGGADGGADGGADGGGYGGADGGVGAGGYGGAGGGAGGGDYYSDSSDSSDSDSSGSDSSESGSSESGSYYTGYNNDGSLGDNGRGSSGHRYSDHGSPGNGSPDNGTPGSGSSRYTFSDDGSLAYKSQDNGTPGRKATNYRFSDDGSLAYGAQDNGKPGSGSPRYRYSDDGSLGNGFPDNGASVGISPSIESPGGPVLGSLEDELLGSDSSDEDDIDDGLGGLGLGAGPGGPGGFVKTPKHKPRTDKKKKPDDKPKRKPKTSRKPKTSRKPKTSRKPKTSRKSKTSRKTKTSRKSKRKSTRKTTRKSSRKVSRKTSRKPRRKITRRPVQRKQPREYKQESPEVEREHSAPSTTNVEIYRDIIKILITSLTSSRGDNGKSGDDGSGSGNGGGDDGNGGGAGNGGGAGNGGGAGNGGGAGNGGGNGGGGNGGGGNDNGNDNGNDDCHYDDDDEHRNRCEDDDDYREKCCDDDESGGSGNFDLSSILKLMQGQSGSSSSSSATESESSSTSTTPSTSSLDLSAILSTLSGRSQKTRSGSALDISSLLGVTGSRPSVATSRGSGLDLSAVLSALGGGKPSTGTTVTSKPSTGTSSAPGLDLSGLLGQLGPILSGLLGPKPDSKPSTGSPSTTSKPSTGSSSGPGLDLSGLLGNLAPVLSALTGGKKPTASSKPTAPSTPSKSTGSSPGKGLDLSGLLGKLSPAPKPKAPKPSIGSGLLPGLDLSSILGKLSGGKKPISGSGKGSKGSSRFCRCALSCSCKSIDYGCVNIGCK.

Residues 23–116 are disordered; sequence GVLPDVDSGF…PITNLGSSTS (94 aa). Positions 37–50 are enriched in basic and acidic residues; sequence EETKSEPKQPDTKP. Over residues 51-63 the composition is skewed to polar residues; sequence EQPSVSKPDSSVN. N-linked (GlcNAc...) asparagine glycosylation occurs at asparagine 136. Disordered regions lie at residues 246 to 767 and 780 to 922; these read AGGG…TSRG and GGGK…GSGL. Residues 251-278 show a composition bias toward low complexity; it reads YYSDSSDSSDSDSSGSDSSESGSSESGS. Residues 309 to 325 are compositionally biased toward polar residues; sequence NGSPDNGTPGSGSSRYT. Residues 410–427 show a composition bias toward acidic residues; that stretch reads LEDELLGSDSSDEDDIDD. Residues 428–443 are compositionally biased toward gly residues; sequence GLGGLGLGAGPGGPGG. Composition is skewed to basic residues over residues 447–457 and 465–540; these read TPKHKPRTDKK and KRKP…VQRK. Residues 541 to 557 show a composition bias toward basic and acidic residues; sequence QPREYKQESPEVEREHS. A compositionally biased stretch (low complexity) spans 572–583; sequence KILITSLTSSRG. A compositionally biased stretch (gly residues) spans 591-643; it reads DGSGSGNGGGDDGNGGGAGNGGGAGNGGGAGNGGGAGNGGGNGGGGNGGGGND. Positions 660–675 are enriched in basic and acidic residues; the sequence is EHRNRCEDDDDYREKC. The segment covering 700 to 724 has biased composition (low complexity); it reads SGSSSSSSATESESSSTSTTPSTSS. 3 stretches are compositionally biased toward polar residues: residues 730 to 744, 758 to 767, and 785 to 801; these read ILST…TRSG, SRPSVATSRG, and STGT…TSSA. 3 stretches are compositionally biased toward low complexity: residues 803-814, 822-857, and 870-907; these read GLDLSGLLGQLG, GPKP…GLLG, and KKPT…KLSP.

As to expression, component of the acid-insoluble and acid-soluble organic matrix of calcified layers of the shell (at protein level).

It is found in the secreted. The polypeptide is Aspartate, glycine, lysine and serine-rich protein (Lottia gigantea (Giant owl limpet)).